Reading from the N-terminus, the 428-residue chain is Protein clpf-1 (428 aa).

Residues glutamate 16 and arginine 56 each contribute to the ATP site. The tract at residues 99 to 118 (KKREEQAVSNSSKPKGPRLL) is disordered. 124-129 (DVGKTT) lines the ATP pocket.

This sequence belongs to the Clp1 family. Clp1 subfamily.

The protein resides in the nucleus. Required for endonucleolytic cleavage during polyadenylation-dependent pre-mRNA 3'-end formation. In Caenorhabditis briggsae, this protein is Protein clpf-1.